A 157-amino-acid polypeptide reads, in one-letter code: UPF0587 protein C2D10.03c (157 aa).

Residues cysteine 34, cysteine 37, cysteine 68, and cysteine 71 each contribute to the Zn(2+) site.

The protein belongs to the UPF0587 family.

This chain is UPF0587 protein C2D10.03c, found in Schizosaccharomyces pombe (strain 972 / ATCC 24843) (Fission yeast).